The following is a 133-amino-acid chain: MAARLDRLKKRADFLRVAALRRKWAAPGLILQAAPASGTDLQADSLRVGFTVSKKVGNSVCRNRARRRLREAVAQVFPAHASAGLDYVVIGRKETLERPYSLLLQDLLAALKRVGALQKTHAAEAPDTASPQS.

Belongs to the RnpA family. In terms of assembly, consists of a catalytic RNA component (M1 or rnpB) and a protein subunit.

It catalyses the reaction Endonucleolytic cleavage of RNA, removing 5'-extranucleotides from tRNA precursor.. RNaseP catalyzes the removal of the 5'-leader sequence from pre-tRNA to produce the mature 5'-terminus. It can also cleave other RNA substrates such as 4.5S RNA. The protein component plays an auxiliary but essential role in vivo by binding to the 5'-leader sequence and broadening the substrate specificity of the ribozyme. The chain is Ribonuclease P protein component from Paramagnetospirillum magneticum (strain ATCC 700264 / AMB-1) (Magnetospirillum magneticum).